Reading from the N-terminus, the 230-residue chain is MAKNKRLAKAQSAVDRAKLYPVVEAMALVKSNATAKFDETVELSLNLGIDPRHADQMVRGLISLPNGTGKTLRVGVFARGPKAEEAKAAGADVVGAEDLAELVQNGTIEFDRCIATPDMMALVGRLGKILGPRGLMPNPKLGTVTMDVKGAITAAKSGQVEFRAEKAGIIHAGIGKASFEAEKLIENAKALVDAIQKAKPTGAKGTYLQKAALSSTMGPGVRVDVSSLTA.

The protein belongs to the universal ribosomal protein uL1 family. As to quaternary structure, part of the 50S ribosomal subunit.

Functionally, binds directly to 23S rRNA. The L1 stalk is quite mobile in the ribosome, and is involved in E site tRNA release. Its function is as follows. Protein L1 is also a translational repressor protein, it controls the translation of the L11 operon by binding to its mRNA. This chain is Large ribosomal subunit protein uL1, found in Acidiphilium cryptum (strain JF-5).